The following is a 100-amino-acid chain: Large ribosomal subunit protein bL28 (100 aa).

This sequence belongs to the bacterial ribosomal protein bL28 family.

In Gluconacetobacter diazotrophicus (strain ATCC 49037 / DSM 5601 / CCUG 37298 / CIP 103539 / LMG 7603 / PAl5), this protein is Large ribosomal subunit protein bL28.